A 294-amino-acid chain; its full sequence is Homoserine kinase (294 aa).

83–93 contacts ATP; that stretch reads PLARGLGSSAS.

This sequence belongs to the GHMP kinase family. Homoserine kinase subfamily.

The protein resides in the cytoplasm. The enzyme catalyses L-homoserine + ATP = O-phospho-L-homoserine + ADP + H(+). The protein operates within amino-acid biosynthesis; L-threonine biosynthesis; L-threonine from L-aspartate: step 4/5. Functionally, catalyzes the ATP-dependent phosphorylation of L-homoserine to L-homoserine phosphate. The chain is Homoserine kinase from Oceanobacillus iheyensis (strain DSM 14371 / CIP 107618 / JCM 11309 / KCTC 3954 / HTE831).